The sequence spans 130 residues: DNA-directed RNA polymerase subunit omega (130 aa).

The segment at 107–130 (SLDVSQESHDDEIDDQDSGEEVPI) is disordered. The span at 115 to 130 (HDDEIDDQDSGEEVPI) shows a compositional bias: acidic residues.

The protein belongs to the RNA polymerase subunit omega family. In terms of assembly, the RNAP catalytic core consists of 2 alpha, 1 beta, 1 beta' and 1 omega subunit. When a sigma factor is associated with the core the holoenzyme is formed, which can initiate transcription.

The catalysed reaction is RNA(n) + a ribonucleoside 5'-triphosphate = RNA(n+1) + diphosphate. Functionally, promotes RNA polymerase assembly. Latches the N- and C-terminal regions of the beta' subunit thereby facilitating its interaction with the beta and alpha subunits. This Wolbachia pipientis subsp. Culex pipiens (strain wPip) protein is DNA-directed RNA polymerase subunit omega.